Here is a 651-residue protein sequence, read N- to C-terminus: Threonine--tRNA ligase (651 aa).

The TGS domain occupies 1 to 61; sequence MIKITFPDNS…NDDATVKLLK (61 aa). The segment at 242 to 541 is catalytic; the sequence is DHRKIGKEMD…LIEHTAGKFP (300 aa). The Zn(2+) site is built by Cys-337, His-388, and His-518.

This sequence belongs to the class-II aminoacyl-tRNA synthetase family. As to quaternary structure, homodimer. Requires Zn(2+) as cofactor.

It is found in the cytoplasm. The catalysed reaction is tRNA(Thr) + L-threonine + ATP = L-threonyl-tRNA(Thr) + AMP + diphosphate + H(+). Catalyzes the attachment of threonine to tRNA(Thr) in a two-step reaction: L-threonine is first activated by ATP to form Thr-AMP and then transferred to the acceptor end of tRNA(Thr). Also edits incorrectly charged L-seryl-tRNA(Thr). This is Threonine--tRNA ligase from Parabacteroides distasonis (strain ATCC 8503 / DSM 20701 / CIP 104284 / JCM 5825 / NCTC 11152).